A 749-amino-acid polypeptide reads, in one-letter code: Photosystem I P700 chlorophyll a apoprotein A2 (749 aa).

The next 8 membrane-spanning stretches (helical) occupy residues 46–69 (LFSTHFGHLAVIGLWVAGNLFHIA), 135–158 (LYQGAIFIDILVAWLLFGGWLHLQ), 175–199 (MNHHLAVLFGFTNIAWTGHLVHVAI), 273–291 (ISHHHIAIGVFMIIGGHMY), 343–366 (LHFQLGLALACLGTAASLVAHHMG), 382–408 (AALYTHHQYIAIFLMCGAFSHGAIFFV), 430–452 (ALISHLSWVCMLLGFHTLALYLH), and 532–550 (FLVHHGIALGLHTTALILI). The [4Fe-4S] cluster site is built by C574 and C583. Transmembrane regions (helical) follow at residues 590–611 (STYMAIFWALNTIAWATYYWHW) and 658–680 (LSPWAYMFLAGHLVWATGFMFLI). Positions 669, 677, and 685 each coordinate divinyl chlorophyll a. Position 686 (W686) interacts with phylloquinone. A helical transmembrane segment spans residues 722-742 (LVGVTHFAVGNIFTFGAFVIA).

The protein belongs to the PsaA/PsaB family. The PsaA/B heterodimer binds the P700 chlorophyll special pair and subsequent electron acceptors. PSI consists of a core antenna complex that captures photons, and an electron transfer chain that converts photonic excitation into a charge separation. The cyanobacterial PSI reaction center is composed of one copy each of PsaA,B,C,D,E,F,I,J,K,L,M and X, and forms trimeric complexes. The cofactor is PSI electron transfer chain: 5 divinyl chlorophyll a, 1 divinyl chlorophyll a', 2 phylloquinones and 3 4Fe-4S clusters. PSI core antenna: 90 divinyl chlorophyll a, 22 carotenoids, 3 phospholipids and 1 galactolipid. P700 is a divinyl chlorophyll a/divinyl chlorophyll a' dimer, A0 is one or more divinyl chlorophyll a, A1 is one or both phylloquinones and FX is a shared 4Fe-4S iron-sulfur center..

Its subcellular location is the cellular thylakoid membrane. The enzyme catalyses reduced [plastocyanin] + hnu + oxidized [2Fe-2S]-[ferredoxin] = oxidized [plastocyanin] + reduced [2Fe-2S]-[ferredoxin]. Its function is as follows. PsaA and PsaB bind P700, the primary electron donor of photosystem I (PSI), as well as the electron acceptors A0, A1 and FX. PSI is a plastocyanin/cytochrome c6-ferredoxin oxidoreductase, converting photonic excitation into a charge separation, which transfers an electron from the donor P700 chlorophyll pair to the spectroscopically characterized acceptors A0, A1, FX, FA and FB in turn. Oxidized P700 is reduced on the lumenal side of the thylakoid membrane by plastocyanin or cytochrome c6. The protein is Photosystem I P700 chlorophyll a apoprotein A2 of Prochlorococcus marinus (strain MIT 9313).